The primary structure comprises 306 residues: tRNA pseudouridine synthase B (306 aa).

Residue Asp43 is the Nucleophile of the active site.

Belongs to the pseudouridine synthase TruB family. Type 1 subfamily.

The catalysed reaction is uridine(55) in tRNA = pseudouridine(55) in tRNA. Responsible for synthesis of pseudouridine from uracil-55 in the psi GC loop of transfer RNAs. The sequence is that of tRNA pseudouridine synthase B from Lacticaseibacillus casei (strain BL23) (Lactobacillus casei).